The primary structure comprises 160 residues: Transcription antitermination protein NusB (160 aa).

This sequence belongs to the NusB family.

Functionally, involved in transcription antitermination. Required for transcription of ribosomal RNA (rRNA) genes. Binds specifically to the boxA antiterminator sequence of the ribosomal RNA (rrn) operons. This chain is Transcription antitermination protein NusB, found in Sinorhizobium medicae (strain WSM419) (Ensifer medicae).